Here is a 213-residue protein sequence, read N- to C-terminus: HTH-type transcriptional regulator SrpR (213 aa).

Residues 10–70 enclose the HTH tetR-type domain; the sequence is EETRQRIIDA…AVLASRQHPL (61 aa). The segment at residues 33–52 is a DNA-binding region (H-T-H motif); sequence TLDQIARKAGVTRGAVYWHF.

In conjunction with SrpS represses the srpABC operon. The sequence is that of HTH-type transcriptional regulator SrpR (srpR) from Pseudomonas putida (Arthrobacter siderocapsulatus).